The primary structure comprises 221 residues: Epididymal secretory glutathione peroxidase (221 aa).

Residues 1–21 (MTTQLRVVHLLPLLLACFVQT) form the signal peptide. C73 is an active-site residue.

It belongs to the glutathione peroxidase family. As to expression, epididymis.

The protein localises to the secreted. The catalysed reaction is 2 glutathione + H2O2 = glutathione disulfide + 2 H2O. Its function is as follows. Protects cells and enzymes from oxidative damage, by catalyzing the reduction of hydrogen peroxide, lipid peroxides and organic hydroperoxide, by glutathione. May constitute a glutathione peroxidase-like protective system against peroxide damage in sperm membrane lipids. This chain is Epididymal secretory glutathione peroxidase (GPX5), found in Macaca fascicularis (Crab-eating macaque).